The chain runs to 933 residues: Dual 3',5'-cyclic-AMP and -GMP phosphodiesterase 11A (933 aa).

The tract at residues 42–125 (HSQGQGALGP…ASQKELRKSF (84 aa)) is disordered. A phosphoserine mark is found at serine 162, serine 163, and serine 239. GAF domains follow at residues 217-370 (DLTS…GIAI) and 402-558 (DLEK…GLGI). Residue serine 424 coordinates 3',5'-cyclic GMP. The 325-residue stretch at 588 to 912 (SKAEVDKFKA…SKWEELHQKR (325 aa)) folds into the PDEase domain. Histidine 664 serves as the catalytic Proton donor. Residues histidine 668, histidine 704, aspartate 705, and aspartate 816 each contribute to the a divalent metal cation site.

It belongs to the cyclic nucleotide phosphodiesterase family. A divalent metal cation is required as a cofactor. As to expression, isoform 1 is present in prostate, pituitary, heart and liver. It is however not present in testis nor in penis, suggesting that weak inhibition by Tadalafil (Cialis) is not relevant (at protein level). Isoform 2 may be expressed in testis. Isoform 4 is expressed in adrenal cortex.

The protein localises to the cytoplasm. It is found in the cytosol. It carries out the reaction 3',5'-cyclic GMP + H2O = GMP + H(+). The catalysed reaction is 3',5'-cyclic AMP + H2O = AMP + H(+). With respect to regulation, inhibited by 3-isobutyl-1-methylxanthine (IBMX), zaprinast and dipyridamole. cGMP acts as an allosteric activator. Weakly inhibited by Sildenafil (Viagra) and Tadalafil (Cialis); however, the fact that the protein is probably absent from testis, suggests that it is not biologically relevant and is not related with erectile dysfunction. In terms of biological role, plays a role in signal transduction by regulating the intracellular concentration of cyclic nucleotides cAMP and cGMP. Catalyzes the hydrolysis of both cAMP and cGMP to 5'-AMP and 5'-GMP, respectively. The chain is Dual 3',5'-cyclic-AMP and -GMP phosphodiesterase 11A from Homo sapiens (Human).